Here is a 78-residue protein sequence, read N- to C-terminus: Protein DsvD (78 aa).

To A.fulgidus DsrD.

In terms of biological role, may play an essential role in dissimilatory sulfite reduction. This is Protein DsvD (dsvD) from Nitratidesulfovibrio vulgaris (strain ATCC 29579 / DSM 644 / CCUG 34227 / NCIMB 8303 / VKM B-1760 / Hildenborough) (Desulfovibrio vulgaris).